The following is a 335-amino-acid chain: Flagellar P-ring protein (335 aa).

The N-terminal stretch at 1-17 (MNKPMLMLITFATSLLA) is a signal peptide.

Belongs to the FlgI family. As to quaternary structure, the basal body constitutes a major portion of the flagellar organelle and consists of four rings (L,P,S, and M) mounted on a central rod.

Its subcellular location is the periplasm. The protein resides in the bacterial flagellum basal body. Assembles around the rod to form the L-ring and probably protects the motor/basal body from shearing forces during rotation. This Borreliella burgdorferi (strain ZS7) (Borrelia burgdorferi) protein is Flagellar P-ring protein.